The chain runs to 671 residues: Probable serine/threonine-protein kinase DDB_G0286627 (671 aa).

The region spanning W31–F283 is the Protein kinase domain. Residues L37–V45 and K61 contribute to the ATP site. D148 (proton acceptor) is an active-site residue. Residues F369 to N389 form a helical membrane-spanning segment. The tract at residues P410–T523 is disordered. Over residues N427–P490 the composition is skewed to low complexity. The span at V491–E513 shows a compositional bias: pro residues.

This sequence belongs to the protein kinase superfamily. STE Ser/Thr protein kinase family. Mg(2+) serves as cofactor.

The protein localises to the membrane. The enzyme catalyses L-seryl-[protein] + ATP = O-phospho-L-seryl-[protein] + ADP + H(+). It catalyses the reaction L-threonyl-[protein] + ATP = O-phospho-L-threonyl-[protein] + ADP + H(+). In Dictyostelium discoideum (Social amoeba), this protein is Probable serine/threonine-protein kinase DDB_G0286627.